The following is a 133-amino-acid chain: Hexon-interlacing protein (133 aa).

The stretch at 97 to 127 (REEDALSVVLTRMEELSQQLQDLFAKVALLN) forms a coiled coil.

This sequence belongs to the adenoviridae hexon-interlacing protein family. As to quaternary structure, homotrimer. Interacts with hexon protein; this interaction tethers the hexons together. Self-interacts with adjacent proteins. Interacts with kinesin light chain KLC1; this interaction leads to capsid disruption at the nuclear pore complex during virus entry into host cell.

The protein localises to the virion. The protein resides in the host nucleus. Its function is as follows. Structural component of the virion that acts as a cement protein on the capsid exterior and forms triskelion structures consisting of three molecules that stabilize three hexon trimers at the center of each icosahedral facet and fixes the peripentonal hexons. Dispensable for assembly. During virus entry, recruits the anterograde motor kinesin-1 to the capsid docked at the nuclear pore complex thereby subjecting the docked capsid to a pulling force. The resulting tension leads to capsid disruption, dispersion of capsid fragments toward cell periphery and eventually viral DNA entry into the host nucleus. The protein is Hexon-interlacing protein of Homo sapiens (Human).